A 318-amino-acid chain; its full sequence is Probable RNA methyltransferase At5g51130 (318 aa).

Disordered stretches follow at residues 1 to 61 and 146 to 184; these read MGRD…NQEV and NSTK…DSAE. Basic and acidic residues predominate over residues 16–34; that stretch reads RSNENEKSVEKVVANEEKV. Low complexity predominate over residues 37–52; it reads QQKQKQQQGQQGNCNQ. The 237-residue stretch at 82–318 folds into the Bin3-type SAM domain; the sequence is DPRLKVLKKE…FDRQILAFQK (237 aa).

The protein belongs to the methyltransferase superfamily.

In terms of biological role, probable RNA methyltransferase. This is Probable RNA methyltransferase At5g51130 from Arabidopsis thaliana (Mouse-ear cress).